Reading from the N-terminus, the 365-residue chain is Baculoviral IAP repeat-containing protein 7 (365 aa).

2 BIR repeats span residues arginine 7–glutamine 73 and arginine 115–leucine 180. 4 residues coordinate Zn(2+): cysteine 149, cysteine 152, histidine 169, and cysteine 176. The self-inhibits the anti-apoptotic function stretch occupies residues alanine 186 to alanine 234. Phosphoserine is present on serine 198. Phosphoserine; by MAPK1 is present on serine 202. Serine 212 carries the post-translational modification Phosphoserine. Serine 216 and serine 219 each carry phosphoserine; by MAPK1. Residues threonine 278–glutamate 306 are disordered. The segment covering threonine 288–lysine 297 has biased composition (basic and acidic residues). An RING-type zinc finger spans residues cysteine 318–arginine 353.

The protein belongs to the IAP family. In terms of processing, auto-ubiquitinated, and degraded in a 2-step mechanism; a caspase-independent first step and a caspase-dependent second step. Phosphorylated via MAPK-dependent and CDK-dependent pathways during oocyte maturation. Phosphorylation does not appear to affect caspase inhibition or autoubiquitination activity.

It is found in the cytoplasm. It carries out the reaction S-ubiquitinyl-[E2 ubiquitin-conjugating enzyme]-L-cysteine + [acceptor protein]-L-lysine = [E2 ubiquitin-conjugating enzyme]-L-cysteine + N(6)-ubiquitinyl-[acceptor protein]-L-lysine.. Functionally, weak apoptotic suppressor. Has E3 ubiquitin-protein ligase activity. Weak inhibitor of caspase activity. In Xenopus tropicalis (Western clawed frog), this protein is Baculoviral IAP repeat-containing protein 7 (birc7).